The following is a 115-amino-acid chain: Insulin (115 aa).

Positions 1-22 (MAALWLQSVSLLVLMLVSWSGS) are cleaved as a signal peptide. Intrachain disulfides connect Cys32–Cys101, Cys44–Cys114, and Cys100–Cys105. Positions 56-92 (DVDPLLGFLPAKSGGAAAGGENEVAEFAFKDQMEMMV) are cleaved as a propeptide — c peptide.

This sequence belongs to the insulin family. Heterodimer of a B chain and an A chain linked by two disulfide bonds.

Its subcellular location is the secreted. Functionally, insulin decreases blood glucose concentration. It increases cell permeability to monosaccharides, amino acids and fatty acids. It accelerates glycolysis, the pentose phosphate cycle, and glycogen synthesis in liver. In Verasper moseri (Barfin flounder), this protein is Insulin (ins).